Reading from the N-terminus, the 363-residue chain is UDP-N-acetylglucosamine--N-acetylmuramyl-(pentapeptide) pyrophosphoryl-undecaprenol N-acetylglucosamine transferase (363 aa).

Residues 21 to 23 (TGG), N129, R170, S196, and Q290 each bind UDP-N-acetyl-alpha-D-glucosamine.

This sequence belongs to the glycosyltransferase 28 family. MurG subfamily.

The protein localises to the cell inner membrane. It catalyses the reaction di-trans,octa-cis-undecaprenyl diphospho-N-acetyl-alpha-D-muramoyl-L-alanyl-D-glutamyl-meso-2,6-diaminopimeloyl-D-alanyl-D-alanine + UDP-N-acetyl-alpha-D-glucosamine = di-trans,octa-cis-undecaprenyl diphospho-[N-acetyl-alpha-D-glucosaminyl-(1-&gt;4)]-N-acetyl-alpha-D-muramoyl-L-alanyl-D-glutamyl-meso-2,6-diaminopimeloyl-D-alanyl-D-alanine + UDP + H(+). The protein operates within cell wall biogenesis; peptidoglycan biosynthesis. In terms of biological role, cell wall formation. Catalyzes the transfer of a GlcNAc subunit on undecaprenyl-pyrophosphoryl-MurNAc-pentapeptide (lipid intermediate I) to form undecaprenyl-pyrophosphoryl-MurNAc-(pentapeptide)GlcNAc (lipid intermediate II). In Synechococcus sp. (strain ATCC 27144 / PCC 6301 / SAUG 1402/1) (Anacystis nidulans), this protein is UDP-N-acetylglucosamine--N-acetylmuramyl-(pentapeptide) pyrophosphoryl-undecaprenol N-acetylglucosamine transferase.